We begin with the raw amino-acid sequence, 498 residues long: Cytochrome P450 6B1 (498 aa).

C443 is a binding site for heme.

This sequence belongs to the cytochrome P450 family. The cofactor is heme. In terms of tissue distribution, midgut microsome.

It is found in the endoplasmic reticulum membrane. It localises to the microsome membrane. It carries out the reaction an organic molecule + reduced [NADPH--hemoprotein reductase] + O2 = an alcohol + oxidized [NADPH--hemoprotein reductase] + H2O + H(+). In terms of biological role, enables the insect to feed on furanocoumarin-producing plants and evolved as an adaptation for detoxification of xanthotoxin and other furanocoumarins. The sequence is that of Cytochrome P450 6B1 (CYP6B1) from Papilio polyxenes (Black swallowtail butterfly).